A 561-amino-acid polypeptide reads, in one-letter code: uncharacterized protein (561 aa).

The span at 314–323 (ANNGSGDSSS) shows a compositional bias: low complexity. The segment at 314–366 (ANNGSGDSSSTALNNESPNTTPKSRTFFSPKGHRRNSSHVSSLTSRSTKKPIT) is disordered. Over residues 324-340 (TALNNESPNTTPKSRTF) the composition is skewed to polar residues. Position 514 is a phosphoserine (Ser514).

The protein localises to the cytoplasm. This is an uncharacterized protein from Saccharomyces cerevisiae (strain ATCC 204508 / S288c) (Baker's yeast).